Here is a 230-residue protein sequence, read N- to C-terminus: Fibrillarin-like rRNA/tRNA 2'-O-methyltransferase (230 aa).

S-adenosyl-L-methionine is bound by residues 87–88, 105–106, 130–131, and 150–153; these read TT, EF, DA, and DVAQ.

Belongs to the methyltransferase superfamily. Fibrillarin family. Interacts with nop5. Component of box C/D small ribonucleoprotein (sRNP) particles that contain rpl7ae, FlpA and nop5, plus a guide RNA.

Functionally, involved in pre-rRNA and tRNA processing. Utilizes the methyl donor S-adenosyl-L-methionine to catalyze the site-specific 2'-hydroxyl methylation of ribose moieties in rRNA and tRNA. Site specificity is provided by a guide RNA that base pairs with the substrate. Methylation occurs at a characteristic distance from the sequence involved in base pairing with the guide RNA. In Methanococcus maripaludis (strain C5 / ATCC BAA-1333), this protein is Fibrillarin-like rRNA/tRNA 2'-O-methyltransferase.